The chain runs to 758 residues: Transcription activator MSS11 (758 aa).

The disordered stretch occupies residues 1-23 (MDNTTNINTNERSSNTDFSSAPN). The region spanning 51–83 (SKQLLYAHIYNYLIKNNYWNSAAKFLSEADLPL) is the LisH domain. Disordered stretches follow at residues 191 to 220 (TQNS…TNRN), 268 to 299 (LQSP…QQQQ), 322 to 355 (QQHQ…GLMP), 428 to 454 (GNQN…NANG), and 587 to 681 (KTNT…TKES). The segment covering 207-220 (DGSNFNLNDPTNRN) has biased composition (polar residues). A compositionally biased stretch (low complexity) spans 269 to 299 (QSPAQPQQSSQQQIQQPQHQPQHQPQQQQQQ). Composition is skewed to polar residues over residues 345–355 (SENSHSTGLMP), 436–454 (TRNN…NANG), and 587–600 (KTNT…STSV). Residues 605–664 (NNNNNNNNNNNNNNNNNSNNSNNNNNNNNNNNNSNNTPTVSQPSSKCTSSSSTTPNITTT) are compositionally biased toward low complexity. Residues 667-676 (PKRKQRVGKT) are compositionally biased toward basic residues.

The protein belongs to the MSS11 family. Interacts with FLO8, STE12 and TEC1.

It localises to the cytoplasm. Its subcellular location is the nucleus. In terms of biological role, transcription factor that regulates pseudohyphal differentiation, invasive growth, floculation, adhesion and starch metabolism in response to nutrient availability. In Saccharomyces cerevisiae (strain ATCC 204508 / S288c) (Baker's yeast), this protein is Transcription activator MSS11 (MSS11).